We begin with the raw amino-acid sequence, 389 residues long: Altered inheritance of mitochondria protein 6 (389 aa).

The signal sequence occupies residues 1–23 (MMLLSQPGIWLLVSLFLCSSVNS).

It belongs to the AIM6 family.

This is Altered inheritance of mitochondria protein 6 (AIM6) from Eremothecium gossypii (strain ATCC 10895 / CBS 109.51 / FGSC 9923 / NRRL Y-1056) (Yeast).